We begin with the raw amino-acid sequence, 485 residues long: GTPase Der (485 aa).

EngA-type G domains follow at residues 3 to 167 and 176 to 349; these read PTIA…PEPE and PVFA…NAAM. Residues 9–16, 56–60, 119–122, 182–189, 229–233, and 294–297 contribute to the GTP site; these read GRPNVGKS, DTGGF, NKGE, DTAGV, and NKWD. The KH-like domain maps to 350–434; the sequence is IKMPTPKITR…PLRIQYNVSE (85 aa). Residues 435-485 form a disordered region; the sequence is NPYENAEDKPKKKPLRRVSLSNRIEKREGRKEEKNRFKKKTKVSVKKQFSK. The segment covering 457-469 has biased composition (basic and acidic residues); sequence RIEKREGRKEEKN. A compositionally biased stretch (basic residues) spans 470–485; sequence RFKKKTKVSVKKQFSK.

The protein belongs to the TRAFAC class TrmE-Era-EngA-EngB-Septin-like GTPase superfamily. EngA (Der) GTPase family. In terms of assembly, associates with the 50S ribosomal subunit.

GTPase that plays an essential role in the late steps of ribosome biogenesis. The polypeptide is GTPase Der (Neisseria gonorrhoeae (strain NCCP11945)).